A 1648-amino-acid chain; its full sequence is MGIPDGSLLDLIDKVRSWITSDSSDSLFLLSSSKQDFGIMPIVSKMCHDCGTKVEQGYCCLSCGSCWCKSCSDTEESKMKLCRECDAEVRELRVKSYDKVHPRDSPDPPSSLATESESLASSLEIRDCRNMASIRCYPSRGEEEEARYCGKQLLSPSSDNYQDSSDIESGSVSARHELFSCKSSAGSSPHDSPLRNNFSPLGRFVQHAKDLRSPTVCSFDNHQEQLLADNLVKPGQGVLEQEDHEEEEDKLQQPLDFENNGRIWYPPPPEDENDDAESNYFHYDDEDDDIGDSATEFSLSSSFSSHIPTKEKLGENSNEPLRTVVHDHFRALVAELLRGEELSPSDDGSAGEWLDIVTALAWQAANFVKPDTRAGGSMDPGNYVKIKCVASGNQNESILIRGIVCSKNITHKRMISQYKNPRVMLLAGSLEYQRVAGQLASFNTLLQQENEHMKAIIAKIESLRPNVLLVEKSASSYAQQYLLEKEISLVLNVKRSLLDRIARCTGAVLCPSLDSISTARLGHCELFRTERVLEQHEAGNQSNRKPSRTLMYFEGCPRRLGCTVVLRGSCREELKKVKHVIQYAVFAAYHLSLETSFLADEGASLPKIRLKQPGMVRTASQRRIIDEGISLITQSPTETDSQALLETAAHEDEHTAPMPEHEVCESLCEDFDPTQIFPPSSEVETEQSDTLNGDFANNLVTRSYSSNQLNDLHEPTLCLSSEIPETPTQQPSGEEDNGRGEEENQLVNPQDLPQHESFYEDDVSSEYFSAADSHQSILVSFSSRCVLKESVCERSRLLRIKFYGSFDKPLGRYLKDDLFDKTSSCRSCKELVDAHVLCYSHQNGNLTINVRRLPSMKLPGEQDGKIWMWHRCLRCAHVDGVPPATRRVVMSDAAWGLSFGKFLELSFSNHATANRVASCGHSLQRDCLRFYGFGNMVAFFRYSPINILTVLLPPSMLEFNSHPQQEWIRTEAAELVGKMRTMYTEISDMLNRMEEKSSLLEPEQSEACDLHSRIIGLIDQLVKEKDEYDDALQPIFEENLQIQGSLDILELNRLRRALMIGAHAWDHQLYLLNSQLKKASVFKTGDDNAPRNPEMHDPPKIDRRMQEGSDERDEQSHTDSEANGDNKDPENIPSPGTSLSERIDSAWLGSFQNLEKAETIAETEGFSAVNSSLRRLARPIRVQSFDSAIRFQERIQKGLPPSSLYLSTLRSFHASGEYRNMVRDPVSNVMRTYSQMLPLEVQKLDLIVGSAPTYISSASQMADGARMLIPQRGLNDIVVPVYDDDPASVVSYAINSKEYKEWIVNKGLASSSSSSNLNNRESEPSAFSTWRSLSMDVDYIQHAVYGSSQDDRKSPHLTISFSDRASSSSTATEGKVKFSVTCYFATQFDTLRKTCCPSEVDFVRSLSRCQRWSAQGGKSNVYFAKSLDERFIIKQVVKTELDSFEDFAPEYFKYLKESLSSGSPTCLAKILGIYQVSIKHPKGGKETKMDLMVMENLFYNRRISRIYDLKGSARSRYNPNTSGADKVLLDMNLLETLRTEPIFLGSKAKRSLERAIWNDTNFLASVDVMDYSLLVGFDEERKELVLGIIDFMRQYTWDKHLETWVKASGILGGPKNASPTIVSPKQYKRRFRKAMTTYFLTVPEPWTS.

The span at 97-106 (YDKVHPRDSP) shows a compositional bias: basic and acidic residues. Disordered stretches follow at residues 97–116 (YDKVHPRDSPDPPSSLATES), 241–276 (QEDHEEEEDKLQQPLDFENNGRIWYPPPPEDENDDA), 721–746 (SEIPETPTQQPSGEEDNGRGEEENQL), and 1083–1139 (KTGD…GTSL). Residues 1084 to 1130 (TGDDNAPRNPEMHDPPKIDRRMQEGSDERDEQSHTDSEANGDNKDPE) show a composition bias toward basic and acidic residues. The 324-residue stretch at 1316 to 1639 (NLNNRESEPS…RFRKAMTTYF (324 aa)) folds into the PIPK domain.

Component of the PI(3,5)P2 regulatory complex at least composed of ATG18, SAC/FIG4, FAB1 and VAC14. Requires Mg(2+) as cofactor. Mn(2+) is required as a cofactor.

The enzyme catalyses a 1,2-diacyl-sn-glycero-3-phospho-(1D-myo-inositol-3-phosphate) + ATP = a 1,2-diacyl-sn-glycero-3-phospho-(1D-myo-inositol-3,5-bisphosphate) + ADP + H(+). Functionally, the PI(3,5)P2 regulatory complex regulates both the synthesis and turnover of phosphatidylinositol 3,5-bisphosphate (PtdIns(3,5)P2). Catalyzes the phosphorylation of phosphatidylinositol 3-phosphate on the fifth hydroxyl of the myo-inositol ring, to form phosphatidylinositol 3,5-bisphosphate. The polypeptide is Putative 1-phosphatidylinositol-3-phosphate 5-kinase FAB1C (FAB1C) (Arabidopsis thaliana (Mouse-ear cress)).